The sequence spans 272 residues: Shikimate dehydrogenase (NADP(+)) (272 aa).

Residues 20-22 (TMS) and threonine 67 each bind shikimate. Lysine 71 (proton acceptor) is an active-site residue. Residue glutamate 83 coordinates NADP(+). Shikimate contacts are provided by asparagine 92 and aspartate 107. NADP(+)-binding positions include 129-133 (GAGGA), 153-158 (NRTKSK), and leucine 216. Tyrosine 218 provides a ligand contact to shikimate. Glycine 239 is a binding site for NADP(+).

Belongs to the shikimate dehydrogenase family. Homodimer.

The catalysed reaction is shikimate + NADP(+) = 3-dehydroshikimate + NADPH + H(+). Its pathway is metabolic intermediate biosynthesis; chorismate biosynthesis; chorismate from D-erythrose 4-phosphate and phosphoenolpyruvate: step 4/7. Its function is as follows. Involved in the biosynthesis of the chorismate, which leads to the biosynthesis of aromatic amino acids. Catalyzes the reversible NADPH linked reduction of 3-dehydroshikimate (DHSA) to yield shikimate (SA). The chain is Shikimate dehydrogenase (NADP(+)) from Maridesulfovibrio salexigens (strain ATCC 14822 / DSM 2638 / NCIMB 8403 / VKM B-1763) (Desulfovibrio salexigens).